Reading from the N-terminus, the 110-residue chain is Nucleoid-associated protein PsycPRwf_1729 (110 aa).

The protein belongs to the YbaB/EbfC family. In terms of assembly, homodimer.

Its subcellular location is the cytoplasm. The protein resides in the nucleoid. Functionally, binds to DNA and alters its conformation. May be involved in regulation of gene expression, nucleoid organization and DNA protection. The protein is Nucleoid-associated protein PsycPRwf_1729 of Psychrobacter sp. (strain PRwf-1).